The chain runs to 214 residues: Cdc42 effector protein 2 (214 aa).

S2 carries the post-translational modification N-acetylserine. Residues 30-44 form the CRIB domain; sequence ISPPLGDFRHTIHIG. S31, S101, S137, S141, and S145 each carry phosphoserine. Residues 118–151 form a disordered region; sequence ALTLPTTQAPPKPPRLHLESPQPSPKSSPQEAGN.

Belongs to the BORG/CEP family. In terms of assembly, interacts with CDC42 and RHOQ, in a GTP-dependent manner, and with SEPT7.

The protein resides in the endomembrane system. It localises to the cytoplasm. It is found in the cytoskeleton. Functionally, probably involved in the organization of the actin cytoskeleton. May act downstream of CDC42 to induce actin filament assembly leading to cell shape changes. Induces pseudopodia formation in fibroblasts in a CDC42-dependent manner. This chain is Cdc42 effector protein 2 (Cdc42ep2), found in Rattus norvegicus (Rat).